The chain runs to 448 residues: Glutamate--tRNA ligase (448 aa).

The 'HIGH' region motif lies at 10–20; the sequence is PSPTGFLHIGN. A 'KMSKS' region motif is present at residues 214–218; sequence KLSKR. Residue Lys217 coordinates ATP.

This sequence belongs to the class-I aminoacyl-tRNA synthetase family. Glutamate--tRNA ligase type 1 subfamily. In terms of assembly, monomer.

The protein localises to the cytoplasm. It catalyses the reaction tRNA(Glu) + L-glutamate + ATP = L-glutamyl-tRNA(Glu) + AMP + diphosphate. Its function is as follows. Catalyzes the attachment of glutamate to tRNA(Glu) in a two-step reaction: glutamate is first activated by ATP to form Glu-AMP and then transferred to the acceptor end of tRNA(Glu). This is Glutamate--tRNA ligase from Phytoplasma australiense.